We begin with the raw amino-acid sequence, 681 residues long: Potassium-transporting ATPase ATP-binding subunit (681 aa).

Transmembrane regions (helical) follow at residues 30–50 (LLVY…FFGI), 59–79 (LAIA…EAIA), 216–236 (ILLV…LPFT), and 255–275 (IALL…SIGI). Asp306 (4-aspartylphosphate intermediate) is an active-site residue. ATP-binding positions include Asp343, Glu347, 376 to 383 (FTATTRMS), and Lys394. Residues Asp517 and Asp521 each coordinate Mg(2+). 3 helical membrane-spanning segments follow: residues 587-607 (FAII…LNLM), 615-635 (AILS…PLSL), and 661-681 (LIAP…LGIV).

Belongs to the cation transport ATPase (P-type) (TC 3.A.3) family. Type IA subfamily. As to quaternary structure, the system is composed of three essential subunits: KdpA, KdpB and KdpC.

The protein localises to the cell membrane. The catalysed reaction is K(+)(out) + ATP + H2O = K(+)(in) + ADP + phosphate + H(+). Functionally, part of the high-affinity ATP-driven potassium transport (or Kdp) system, which catalyzes the hydrolysis of ATP coupled with the electrogenic transport of potassium into the cytoplasm. This subunit is responsible for energy coupling to the transport system and for the release of the potassium ions to the cytoplasm. This Listeria monocytogenes serotype 4b (strain CLIP80459) protein is Potassium-transporting ATPase ATP-binding subunit.